Reading from the N-terminus, the 1574-residue chain is DNA-directed RNA polymerase subunit beta' (1574 aa).

The Zn(2+) site is built by Cys64, Cys66, Cys79, and Cys82. Residues Asp590, Asp592, and Asp594 each coordinate Mg(2+). Residues Cys928, Cys1002, Cys1009, and Cys1012 each coordinate Zn(2+).

Belongs to the RNA polymerase beta' chain family. As to quaternary structure, the RNAP catalytic core consists of 2 alpha, 1 beta, 1 beta' and 1 omega subunit. When a sigma factor is associated with the core the holoenzyme is formed, which can initiate transcription. It depends on Mg(2+) as a cofactor. Zn(2+) serves as cofactor.

It catalyses the reaction RNA(n) + a ribonucleoside 5'-triphosphate = RNA(n+1) + diphosphate. In terms of biological role, DNA-dependent RNA polymerase catalyzes the transcription of DNA into RNA using the four ribonucleoside triphosphates as substrates. This Aquifex aeolicus (strain VF5) protein is DNA-directed RNA polymerase subunit beta'.